The sequence spans 168 residues: UPF0134 protein MPN_524 (168 aa).

It belongs to the UPF0134 family.

In Mycoplasma pneumoniae (strain ATCC 29342 / M129 / Subtype 1) (Mycoplasmoides pneumoniae), this protein is UPF0134 protein MPN_524.